The sequence spans 270 residues: uncharacterized protein (270 aa).

Positions 22–31 (EAPQRTEASR) are enriched in basic and acidic residues. The segment at 22–42 (EAPQRTEASRTHPSPFLALPG) is disordered.

This is an uncharacterized protein from Homo sapiens (Human).